A 427-amino-acid polypeptide reads, in one-letter code: Gamma-glutamyl phosphate reductase (427 aa).

The protein belongs to the gamma-glutamyl phosphate reductase family.

Its subcellular location is the cytoplasm. It catalyses the reaction L-glutamate 5-semialdehyde + phosphate + NADP(+) = L-glutamyl 5-phosphate + NADPH + H(+). It participates in amino-acid biosynthesis; L-proline biosynthesis; L-glutamate 5-semialdehyde from L-glutamate: step 2/2. Its function is as follows. Catalyzes the NADPH-dependent reduction of L-glutamate 5-phosphate into L-glutamate 5-semialdehyde and phosphate. The product spontaneously undergoes cyclization to form 1-pyrroline-5-carboxylate. The chain is Gamma-glutamyl phosphate reductase from Allorhizobium ampelinum (strain ATCC BAA-846 / DSM 112012 / S4) (Agrobacterium vitis (strain S4)).